We begin with the raw amino-acid sequence, 307 residues long: Elongation factor Ts (307 aa).

The segment at 80–83 (TDFV) is involved in Mg(2+) ion dislocation from EF-Tu.

This sequence belongs to the EF-Ts family.

The protein resides in the cytoplasm. Functionally, associates with the EF-Tu.GDP complex and induces the exchange of GDP to GTP. It remains bound to the aminoacyl-tRNA.EF-Tu.GTP complex up to the GTP hydrolysis stage on the ribosome. The polypeptide is Elongation factor Ts (Rhodopseudomonas palustris (strain BisA53)).